The following is a 156-amino-acid chain: 6,7-dimethyl-8-ribityllumazine synthase (156 aa).

Residues Phe-23, 57 to 59 (SWE), and 81 to 83 (AVV) contribute to the 5-amino-6-(D-ribitylamino)uracil site. (2S)-2-hydroxy-3-oxobutyl phosphate is bound at residue 86–87 (ET). His-89 functions as the Proton donor in the catalytic mechanism. Phe-114 contributes to the 5-amino-6-(D-ribitylamino)uracil binding site. (2S)-2-hydroxy-3-oxobutyl phosphate is bound at residue Arg-128.

This sequence belongs to the DMRL synthase family.

The enzyme catalyses (2S)-2-hydroxy-3-oxobutyl phosphate + 5-amino-6-(D-ribitylamino)uracil = 6,7-dimethyl-8-(1-D-ribityl)lumazine + phosphate + 2 H2O + H(+). Its pathway is cofactor biosynthesis; riboflavin biosynthesis; riboflavin from 2-hydroxy-3-oxobutyl phosphate and 5-amino-6-(D-ribitylamino)uracil: step 1/2. Functionally, catalyzes the formation of 6,7-dimethyl-8-ribityllumazine by condensation of 5-amino-6-(D-ribitylamino)uracil with 3,4-dihydroxy-2-butanone 4-phosphate. This is the penultimate step in the biosynthesis of riboflavin. The sequence is that of 6,7-dimethyl-8-ribityllumazine synthase from Salinibacter ruber (strain DSM 13855 / M31).